The sequence spans 73 residues: Homeodomain-only protein (73 aa).

Positions 3–62 form a DNA-binding region, homeobox; degenerate; sequence AETASGPTEDQVEILEYNFNKVDKHPDSTTLCLIAAEAGLSEEETQKWFKQRLAKWRRSE.

Interacts with serum response factor (SRF). Component of a large complex containing histone deacetylases such as HDAC2. Interacts with the acetylated forms of HSPA1A and HSPA1B. Interacts with HSPA8. Widely expressed. Expressed in the heart, brain, placenta, lung, skeletal and smooth muscles, uterus, urinary bladder, kidney and spleen. Down-regulated in some types of cancer such as lung cancer, choriocarcinoma, head and neck squamous cell carcinoma and oral squamous cell carcinoma.

The protein resides in the nucleus. Its subcellular location is the cytoplasm. Its function is as follows. Atypical homeodomain protein which does not bind DNA and is required to modulate cardiac growth and development. Acts via its interaction with SRF, thereby modulating the expression of SRF-dependent cardiac-specific genes and cardiac development. Prevents SRF-dependent transcription either by inhibiting SRF binding to DNA or by recruiting histone deacetylase (HDAC) proteins that prevent transcription by SRF. Overexpression causes cardiac hypertrophy. May act as a tumor suppressor. Acts as a co-chaperone for HSPA1A and HSPA1B chaperone proteins and assists in chaperone-mediated protein refolding. This Homo sapiens (Human) protein is Homeodomain-only protein (HOPX).